A 437-amino-acid polypeptide reads, in one-letter code: Histidinol dehydrogenase (437 aa).

3 residues coordinate NAD(+): tyrosine 133, glutamine 191, and asparagine 214. Positions 240, 262, and 265 each coordinate substrate. Residues glutamine 262 and histidine 265 each coordinate Zn(2+). Active-site proton acceptor residues include glutamate 329 and histidine 330. Positions 330, 363, 417, and 422 each coordinate substrate. Position 363 (aspartate 363) interacts with Zn(2+). Position 422 (histidine 422) interacts with Zn(2+).

Belongs to the histidinol dehydrogenase family. Homodimer. It depends on Zn(2+) as a cofactor.

The enzyme catalyses L-histidinol + 2 NAD(+) + H2O = L-histidine + 2 NADH + 3 H(+). Its pathway is amino-acid biosynthesis; L-histidine biosynthesis; L-histidine from 5-phospho-alpha-D-ribose 1-diphosphate: step 9/9. Its function is as follows. Catalyzes the sequential NAD-dependent oxidations of L-histidinol to L-histidinaldehyde and then to L-histidine. The sequence is that of Histidinol dehydrogenase from Blochmanniella floridana.